The following is a 620-amino-acid chain: Coenzyme F420-dependent sulfite reductase (620 aa).

In terms of domain architecture, 4Fe-4S ferredoxin-type 1 spans 6-35 (LNEIVDSGVCARCGTCTIVCPNGILTFDER). [4Fe-4S] cluster-binding residues include cysteine 15, cysteine 18, cysteine 21, cysteine 25, cysteine 428, cysteine 434, cysteine 468, cysteine 472, cysteine 495, cysteine 498, cysteine 501, cysteine 505, cysteine 524, cysteine 527, cysteine 530, and cysteine 534. Cysteine 472 lines the siroheme pocket. 2 consecutive 4Fe-4S ferredoxin-type domains span residues 486-515 (KYPK…IRGE) and 520-544 (NYNV…VKEE).

This sequence belongs to the nitrite and sulfite reductase 4Fe-4S domain family. [4Fe-4S] cluster is required as a cofactor. The cofactor is siroheme.

It carries out the reaction 3 oxidized coenzyme F420-(gamma-L-Glu)(n) + hydrogen sulfide + 3 H2O + 2 H(+) = 3 reduced coenzyme F420-(gamma-L-Glu)(n) + sulfite. Functionally, catalyzes the reduction of sulfite to sulfide using reduced F420 as the electron source. Involved in sulfite detoxification and assimilation. Cannot use NADH or NADPH. This chain is Coenzyme F420-dependent sulfite reductase, found in Methanocaldococcus jannaschii (strain ATCC 43067 / DSM 2661 / JAL-1 / JCM 10045 / NBRC 100440) (Methanococcus jannaschii).